Reading from the N-terminus, the 315-residue chain is MSCNIIKKISNKRYYSINYKKKTKTISFYKYCKIENIDCIQEKLFEICKKLEILGRIYISYEGINAHISIKKHKIEELKIFIKKTFDYLTDIRFNLYSDNKKQPFKKLKIKKKLNILNCGIKDCSFDIKNTGHKLTANDFNAILMKNDFILVDMRNSYEYEIGHFENALKISSKTFRQQLKLLINNLKFYKSKNIIMYCTGGIRCEAASAWMMHNGFKYVSFLDGGIIEYVNFIKKNNYPMKFLGKIFVFDDRLYEKVTSDVLSLCHQCKIQPCDNYINCKNKKCNSLFIQCIYCNKTLNEFCSNFCNEYYQSKN.

The region spanning 145–235 (MKNDFILVDM…GIIEYVNFIK (91 aa)) is the Rhodanese domain. C199 acts as the Cysteine persulfide intermediate in catalysis.

Belongs to the TrhO family.

The enzyme catalyses uridine(34) in tRNA + AH2 + O2 = 5-hydroxyuridine(34) in tRNA + A + H2O. Catalyzes oxygen-dependent 5-hydroxyuridine (ho5U) modification at position 34 in tRNAs. This chain is tRNA uridine(34) hydroxylase, found in Wigglesworthia glossinidia brevipalpis.